Consider the following 205-residue polypeptide: N-(5'-phosphoribosyl)anthranilate isomerase (205 aa).

This sequence belongs to the TrpF family.

It catalyses the reaction N-(5-phospho-beta-D-ribosyl)anthranilate = 1-(2-carboxyphenylamino)-1-deoxy-D-ribulose 5-phosphate. The protein operates within amino-acid biosynthesis; L-tryptophan biosynthesis; L-tryptophan from chorismate: step 3/5. The protein is N-(5'-phosphoribosyl)anthranilate isomerase of Thiobacillus denitrificans (strain ATCC 25259 / T1).